Here is a 496-residue protein sequence, read N- to C-terminus: Amidophosphoribosyltransferase (496 aa).

A propeptide spanning residues methionine 1–glutamate 21 is cleaved from the precursor. Residue cysteine 22 is the Nucleophile of the active site. A Glutamine amidotransferase type-2 domain is found at cysteine 22–glutamine 241.

It in the C-terminal section; belongs to the purine/pyrimidine phosphoribosyltransferase family.

It catalyses the reaction 5-phospho-beta-D-ribosylamine + L-glutamate + diphosphate = 5-phospho-alpha-D-ribose 1-diphosphate + L-glutamine + H2O. It participates in purine metabolism; IMP biosynthesis via de novo pathway; N(1)-(5-phospho-D-ribosyl)glycinamide from 5-phospho-alpha-D-ribose 1-diphosphate: step 1/2. Functionally, catalyzes the formation of phosphoribosylamine from phosphoribosylpyrophosphate (PRPP) and glutamine. This chain is Amidophosphoribosyltransferase, found in Rhizobium etli (strain ATCC 51251 / DSM 11541 / JCM 21823 / NBRC 15573 / CFN 42).